The sequence spans 150 residues: D-aminoacyl-tRNA deacylase (150 aa).

A Gly-cisPro motif, important for rejection of L-amino acids motif is present at residues 138-139 (GP).

Belongs to the DTD family. As to quaternary structure, homodimer.

The protein resides in the cytoplasm. It carries out the reaction glycyl-tRNA(Ala) + H2O = tRNA(Ala) + glycine + H(+). The catalysed reaction is a D-aminoacyl-tRNA + H2O = a tRNA + a D-alpha-amino acid + H(+). Its function is as follows. An aminoacyl-tRNA editing enzyme that deacylates mischarged D-aminoacyl-tRNAs. Also deacylates mischarged glycyl-tRNA(Ala), protecting cells against glycine mischarging by AlaRS. Acts via tRNA-based rather than protein-based catalysis; rejects L-amino acids rather than detecting D-amino acids in the active site. By recycling D-aminoacyl-tRNA to D-amino acids and free tRNA molecules, this enzyme counteracts the toxicity associated with the formation of D-aminoacyl-tRNA entities in vivo and helps enforce protein L-homochirality. The sequence is that of D-aminoacyl-tRNA deacylase from Chlorobium phaeobacteroides (strain DSM 266 / SMG 266 / 2430).